The chain runs to 180 residues: UPF0398 protein EF_1150 (180 aa).

The protein belongs to the UPF0398 family.

The sequence is that of UPF0398 protein EF_1150 from Enterococcus faecalis (strain ATCC 700802 / V583).